The chain runs to 586 residues: Malonate--CoA ligase ACSF3, mitochondrial (586 aa).

The transit peptide at 1 to 89 (MPLPYVGMAL…SREICQLRAC (89 aa)) directs the protein to the mitochondrion. Residues 203–211 (TSGTTGRPK), D457, R471, and K563 each bind ATP.

The protein belongs to the ATP-dependent AMP-binding enzyme family.

It is found in the mitochondrion. It carries out the reaction tetracosanoate + ATP + CoA = tetracosanoyl-CoA + AMP + diphosphate. It catalyses the reaction malonate + ATP + CoA = malonyl-CoA + AMP + diphosphate. Functionally, catalyzes the initial reaction in intramitochondrial fatty acid synthesis, by activating malonate and methylmalonate, but not acetate, into their respective CoA thioester. May have some preference toward very-long-chain substrates. The polypeptide is Malonate--CoA ligase ACSF3, mitochondrial (Bos taurus (Bovine)).